The primary structure comprises 311 residues: Ribose-5-phosphate isomerase (311 aa).

Residues 22-32 (AGGAASGGGGN) are compositionally biased toward gly residues. A disordered region spans residues 22–67 (AGGAASGGGGNSWDLPGSHVRLPGRAQSGTRGGAGNTSTSCGDSNS). Arginine 52 is modified (omega-N-methylarginine). Positions 57-67 (NTSTSCGDSNS) are enriched in polar residues. Serine 106 carries the post-translational modification Phosphoserine.

This sequence belongs to the ribose 5-phosphate isomerase family.

It catalyses the reaction aldehydo-D-ribose 5-phosphate = D-ribulose 5-phosphate. Its pathway is carbohydrate degradation; pentose phosphate pathway; D-ribose 5-phosphate from D-ribulose 5-phosphate (non-oxidative stage): step 1/1. Catalyzes the reversible conversion of ribose-5-phosphate to ribulose 5-phosphate and participates in the first step of the non-oxidative branch of the pentose phosphate pathway. This chain is Ribose-5-phosphate isomerase, found in Homo sapiens (Human).